A 162-amino-acid chain; its full sequence is Caveolin-2 (162 aa).

Residues 1-86 (MGLETEKADV…FEISKYVLYK (86 aa)) lie on the Cytoplasmic side of the membrane. Residue Tyr19 is modified to Phosphotyrosine; by SRC. Ser20 and Ser23 each carry phosphoserine. Residues 87–107 (FLTVFLAIPLAFAAGVLFAVL) constitute an intramembrane region (helical). Residues 108-162 (SCLHIWILMPFVKTCLMVLPSVQTIWRSVTDVVIAPLCASIGRSFSSVGLQLSHD) are Cytoplasmic-facing.

Belongs to the caveolin family. Monomer or homodimer. Interacts with CAV1; the interaction forms a stable heterooligomeric complex that is required for targeting to lipid rafts and for caveolae formation. Tyrosine phosphorylated forms do not form heterooligomers with the Tyr-19-phosphorylated form existing as a monomer or dimer. Interacts (tyrosine phosphorylated form) with the SH2 domain-containing proteins, RASA1, NCK1 and SRC. Interacts (tyrosine phosphorylated form) with INSR. Interacts (Tyr-19 phosphorylated form) with MAPK1 (phosphorylated form); the interaction, promoted by insulin, leads to nuclear location and MAPK1 activation. Interacts with STAT3; the interaction is increased on insulin-induced tyrosine phosphorylation leading to STAT activation. In terms of processing, phosphorylated on serine and tyrosine residues. CAV1 promotes phosphorylation on Ser-23 which then targets the complex to the plasma membrane, lipid rafts and caveolae. Phosphorylation on Tyr-19 is required for insulin-induced phosphorylation of MAPK1 and DNA binding of STAT3. Tyrosine phosphorylation is induced by both EGF and insulin.

It localises to the nucleus. Its subcellular location is the cytoplasm. It is found in the golgi apparatus membrane. The protein resides in the cell membrane. The protein localises to the membrane. It localises to the caveola. Functionally, may act as a scaffolding protein within caveolar membranes. Interacts directly with G-protein alpha subunits and can functionally regulate their activity. Acts as an accessory protein in conjunction with CAV1 in targeting to lipid rafts and driving caveolae formation. Positive regulator of cellular mitogenesis of the MAPK signaling pathway. Required for the insulin-stimulated nuclear translocation and activation of MAPK1 and STAT3, and the subsequent regulation of cell cycle progression. The protein is Caveolin-2 (CAV2) of Oryctolagus cuniculus (Rabbit).